The sequence spans 689 residues: Transketolase (689 aa).

A substrate-binding site is contributed by histidine 56. Residues histidine 96 and 144 to 146 (GNL) each bind thiamine diphosphate. Aspartate 185 lines the Mg(2+) pocket. Positions 186 and 215 each coordinate thiamine diphosphate. Mg(2+) contacts are provided by asparagine 215 and isoleucine 217. Positions 289, 380, and 407 each coordinate substrate. Position 289 (histidine 289) interacts with thiamine diphosphate. Glutamate 434 (proton donor) is an active-site residue. Phenylalanine 460 serves as a coordination point for thiamine diphosphate. Substrate-binding residues include histidine 484, aspartate 492, and arginine 543.

This sequence belongs to the transketolase family. In terms of assembly, homodimer. It depends on Mg(2+) as a cofactor. Ca(2+) serves as cofactor. The cofactor is Mn(2+). Requires Co(2+) as cofactor. Thiamine diphosphate is required as a cofactor.

The catalysed reaction is D-sedoheptulose 7-phosphate + D-glyceraldehyde 3-phosphate = aldehydo-D-ribose 5-phosphate + D-xylulose 5-phosphate. Its function is as follows. Catalyzes the transfer of a two-carbon ketol group from a ketose donor to an aldose acceptor, via a covalent intermediate with the cofactor thiamine pyrophosphate. In Aquifex aeolicus (strain VF5), this protein is Transketolase (tkt).